The chain runs to 808 residues: Putative minor structural protein VP5 (808 aa).

It localises to the virion. The polypeptide is Putative minor structural protein VP5 (Rice ragged stunt virus (isolate Thailand) (RRSV)).